We begin with the raw amino-acid sequence, 191 residues long: A-type ATP synthase subunit E 1 (191 aa).

Belongs to the V-ATPase E subunit family. Has multiple subunits with at least A(3), B(3), C, D, E, F, H, I and proteolipid K(x).

It is found in the cell membrane. Its function is as follows. Component of the A-type ATP synthase that produces ATP from ADP in the presence of a proton gradient across the membrane. The protein is A-type ATP synthase subunit E 1 of Methanospirillum hungatei JF-1 (strain ATCC 27890 / DSM 864 / NBRC 100397 / JF-1).